A 474-amino-acid polypeptide reads, in one-letter code: MSTEIKTQVVVLGAGPAGYSAAFRCADLGLETVIVERYNTLGGVCLNVGCIPSKALLHVAKVIEEAKALAEHGIVFGEPKTDIDKIRTWKEKVINQLTGGLAGMAKGRKVKVVNGLGKFTGANTLEVEGENGKTVINFDNAIIAAGSRPIQLPFIPHEDPRIWDSTDALELKEVPERLLVMGGGIIGLEMGTVYHALGSQIDVVEMFDQVIPAADKDIVKVFTKRISKKFNLMLETKVTAVEAKEDGIYVTMEGKKAPAEPQRYDAVLVAIGRVPNGKNLDAGKAGVEVDDRGFIRVDKQLRTNVPHIFAIGDIVGQPMLAHKGVHEGHVAAEVIAGKKHYFDPKVIPSIAYTEPEVAWVGLTEKEAKEKGISYETATFPWAASGRAIASDCADGMTKLIFDKESHRVIGGAIVGTNGGELLGEIGLAIEMGCDAEDIALTIHAHPTLHESVGLAAEVFEGSITDLPNPKAKKK.

FAD-binding positions include 36-45 (ERYNTLGGVC), lysine 54, and glycine 117. Cysteine 45 and cysteine 50 are disulfide-bonded. NAD(+)-binding positions include 182–186 (GGGII) and glutamate 205. At lysine 220 the chain carries N6-acetyllysine. Residues valine 238 and 270–273 (AIGR) each bind NAD(+). 2 residues coordinate FAD: aspartate 313 and alanine 321. Histidine 445 serves as the catalytic Proton acceptor.

It belongs to the class-I pyridine nucleotide-disulfide oxidoreductase family. Homodimer. Requires FAD as cofactor.

It is found in the cytoplasm. The catalysed reaction is N(6)-[(R)-dihydrolipoyl]-L-lysyl-[protein] + NAD(+) = N(6)-[(R)-lipoyl]-L-lysyl-[protein] + NADH + H(+). In terms of biological role, lipoamide dehydrogenase is a component of the glycine cleavage system as well as of the alpha-ketoacid dehydrogenase complexes. The chain is Dihydrolipoyl dehydrogenase (lpdA) from Shigella flexneri.